The primary structure comprises 64 residues: Small, acid-soluble spore protein D (64 aa).

Belongs to the alpha/beta-type SASP family.

Its function is as follows. SASP are bound to spore DNA. They are double-stranded DNA-binding proteins that cause DNA to change to an a-like conformation. They protect the DNA backbone from chemical and enzymatic cleavage and are thus involved in dormant spore's high resistance to UV light. In Bacillus subtilis (strain 168), this protein is Small, acid-soluble spore protein D (sspD).